The chain runs to 282 residues: Purine nucleoside phosphorylase (282 aa).

Phosphate is bound by residues Ser46, His78, and 103 to 105 (RTH). Glu204 is an active-site residue. An a purine D-ribonucleoside-binding site is contributed by Glu204. Position 223 (Ser223) interacts with phosphate. Residue Asn246 coordinates a purine D-ribonucleoside.

This sequence belongs to the PNP/MTAP phosphorylase family. As to quaternary structure, homotrimer.

It carries out the reaction a purine 2'-deoxy-D-ribonucleoside + phosphate = a purine nucleobase + 2-deoxy-alpha-D-ribose 1-phosphate. It participates in purine metabolism; purine nucleoside salvage. Its function is as follows. The purine nucleoside phosphorylases catalyze the phosphorolytic breakdown of the N-glycosidic bond in the beta-(deoxy)ribonucleoside molecules, with the formation of the corresponding free purine bases and pentose-1-phosphate. Cleaves guanosine, inosine, 2'-deoxyguanosine and 2'-deoxyinosine. The polypeptide is Purine nucleoside phosphorylase (punA) (Cellulomonas sp).